The primary structure comprises 303 residues: Ribonuclease HIII (303 aa).

An RNase H type-2 domain is found at 85 to 302 (CSLIGSDEVG…TKKAYQLLKK (218 aa)). Positions 91, 92, and 196 each coordinate a divalent metal cation.

This sequence belongs to the RNase HII family. RnhC subfamily. Requires Mn(2+) as cofactor. Mg(2+) is required as a cofactor.

Its subcellular location is the cytoplasm. The catalysed reaction is Endonucleolytic cleavage to 5'-phosphomonoester.. In terms of biological role, endonuclease that specifically degrades the RNA of RNA-DNA hybrids. This chain is Ribonuclease HIII, found in Streptococcus mutans serotype c (strain ATCC 700610 / UA159).